Here is a 183-residue protein sequence, read N- to C-terminus: MGIAECYEQKMKKSLSALQEGFNTLRTERATAHLLDQITVDYYQQPTALSQVATVSVPEARLIIIQPWDKTLLADIERAILKSKLSLNPSNDGKVIRLVIPPLTQERRKELVRQARALAEQARVAIRNIRREGIEEAKRGHKEGLLSEDALKAAEEAFQKATDASVADVARYLAEKEKDILEG.

The protein belongs to the RRF family.

It is found in the cytoplasm. Responsible for the release of ribosomes from messenger RNA at the termination of protein biosynthesis. May increase the efficiency of translation by recycling ribosomes from one round of translation to another. The sequence is that of Ribosome-recycling factor from Treponema pallidum (strain Nichols).